The following is a 75-amino-acid chain: UPF0235 protein Mvan_2846 (75 aa).

The protein belongs to the UPF0235 family.

The sequence is that of UPF0235 protein Mvan_2846 from Mycolicibacterium vanbaalenii (strain DSM 7251 / JCM 13017 / BCRC 16820 / KCTC 9966 / NRRL B-24157 / PYR-1) (Mycobacterium vanbaalenii).